Reading from the N-terminus, the 192-residue chain is Xanthine phosphoribosyltransferase (192 aa).

Xanthine is bound by residues Leu20 and Asn27. 5-phospho-alpha-D-ribose 1-diphosphate is bound at residue 128-132 (ANGDA). Lys156 serves as a coordination point for xanthine.

Belongs to the purine/pyrimidine phosphoribosyltransferase family. Xpt subfamily. Homodimer.

It is found in the cytoplasm. It catalyses the reaction XMP + diphosphate = xanthine + 5-phospho-alpha-D-ribose 1-diphosphate. It participates in purine metabolism; XMP biosynthesis via salvage pathway; XMP from xanthine: step 1/1. Its function is as follows. Converts the preformed base xanthine, a product of nucleic acid breakdown, to xanthosine 5'-monophosphate (XMP), so it can be reused for RNA or DNA synthesis. The protein is Xanthine phosphoribosyltransferase of Staphylococcus aureus (strain Mu3 / ATCC 700698).